Reading from the N-terminus, the 217-residue chain is Probable D-methionine transport system permease protein MetI (217 aa).

Residues 13 to 207 (TLETLYMGFI…LIVMLSQKLG (195 aa)) form the ABC transmembrane type-1 domain. The next 5 membrane-spanning stretches (helical) occupy residues 20–40 (GFIA…LAFL), 58–78 (VIIN…LLPF), 81–101 (LVVG…VSAI), 143–163 (IPIL…YSAM), and 184–204 (NMIY…MLSQ).

This sequence belongs to the binding-protein-dependent transport system permease family. CysTW subfamily.

The protein resides in the cell inner membrane. Functionally, part of the binding-protein-dependent transport system for D-methionine. Probably responsible for the translocation of the substrate across the membrane. This Pasteurella multocida (strain Pm70) protein is Probable D-methionine transport system permease protein MetI (metI).